We begin with the raw amino-acid sequence, 190 residues long: NADH-ubiquinone oxidoreductase chain 5 (190 aa).

6 consecutive transmembrane segments (helical) span residues 1-21, 68-88, 94-114, 118-138, 146-166, and 167-187; these read MVISPSTLLVSITLSIICLIV, INILKFLAFLSLINLFLFVGL, NVTFSIWLSNTAANVSLSILF, FIVFLTVALVVTWSIMNFSLL, NVFLLLTIFLLNMLILTCSNS, and LFLLFLGWEGVGFLSFLLIKM.

It belongs to the complex I subunit 5 family.

The protein localises to the mitochondrion inner membrane. It carries out the reaction a ubiquinone + NADH + 5 H(+)(in) = a ubiquinol + NAD(+) + 4 H(+)(out). Functionally, core subunit of the mitochondrial membrane respiratory chain NADH dehydrogenase (Complex I) that is believed to belong to the minimal assembly required for catalysis. Complex I functions in the transfer of electrons from NADH to the respiratory chain. The immediate electron acceptor for the enzyme is believed to be ubiquinone. This is NADH-ubiquinone oxidoreductase chain 5 (ND5) from Arbacia lixula (Black urchin).